A 512-amino-acid polypeptide reads, in one-letter code: D-alanine--D-alanyl carrier protein ligase (512 aa).

152–153 is an ATP binding site; sequence TS. Residue Asp-199 coordinates D-alanine. 294 to 299 provides a ligand contact to ATP; that stretch reads NAYGPT. Val-303 lines the D-alanine pocket. ATP contacts are provided by residues Asp-385, 397 to 400, and Lys-499; that span reads YGGR. D-alanine is bound at residue Lys-499.

It belongs to the ATP-dependent AMP-binding enzyme family. DltA subfamily.

The protein resides in the cytoplasm. It carries out the reaction holo-[D-alanyl-carrier protein] + D-alanine + ATP = D-alanyl-[D-alanyl-carrier protein] + AMP + diphosphate. Its pathway is cell wall biogenesis; lipoteichoic acid biosynthesis. Its function is as follows. Catalyzes the first step in the D-alanylation of lipoteichoic acid (LTA), the activation of D-alanine and its transfer onto the D-alanyl carrier protein (Dcp) DltC. In an ATP-dependent two-step reaction, forms a high energy D-alanyl-AMP intermediate, followed by transfer of the D-alanyl residue as a thiol ester to the phosphopantheinyl prosthetic group of the Dcp. D-alanylation of LTA plays an important role in modulating the properties of the cell wall in Gram-positive bacteria, influencing the net charge of the cell wall. The protein is D-alanine--D-alanyl carrier protein ligase of Streptococcus pyogenes serotype M49 (strain NZ131).